Consider the following 121-residue polypeptide: Large ribosomal subunit protein bL17 (121 aa).

The protein belongs to the bacterial ribosomal protein bL17 family. Part of the 50S ribosomal subunit. Contacts protein L32.

The protein is Large ribosomal subunit protein bL17 of Sulfurihydrogenibium sp. (strain YO3AOP1).